The following is a 98-amino-acid chain: Putative protein adenylyltransferase MJ0126 (98 aa).

The GSX(10)DXD motif motif lies at 31–45; the sequence is GSYARNEQTETSDID. Mg(2+) contacts are provided by Asp-43, Asp-45, and Asp-75.

Belongs to the MntA antitoxin family. As to quaternary structure, probably forms a complex with cognate toxin MJ0125. Mg(2+) is required as a cofactor.

It catalyses the reaction L-tyrosyl-[protein] + ATP = O-(5'-adenylyl)-L-tyrosyl-[protein] + diphosphate. It carries out the reaction O-(5'-adenylyl)-L-tyrosyl-[protein] + ATP = O-[5'-(adenylyl-(5'-&gt;3')-adenylyl)]-L-tyrosyl-[protein] + diphosphate. Its function is as follows. Probable antitoxin component of a putative type VII toxin-antitoxin (TA) system. Neutralizes cognate toxic MJ0125 by di-AMPylation. The chain is Putative protein adenylyltransferase MJ0126 from Methanocaldococcus jannaschii (strain ATCC 43067 / DSM 2661 / JAL-1 / JCM 10045 / NBRC 100440) (Methanococcus jannaschii).